The chain runs to 193 residues: Threonylcarbamoyl-AMP synthase (193 aa).

The region spanning Ser14 to Arg193 is the YrdC-like domain.

This sequence belongs to the SUA5 family. TsaC subfamily.

Its subcellular location is the cytoplasm. It catalyses the reaction L-threonine + hydrogencarbonate + ATP = L-threonylcarbamoyladenylate + diphosphate + H2O. In terms of biological role, required for the formation of a threonylcarbamoyl group on adenosine at position 37 (t(6)A37) in tRNAs that read codons beginning with adenine. Catalyzes the conversion of L-threonine, HCO(3)(-)/CO(2) and ATP to give threonylcarbamoyl-AMP (TC-AMP) as the acyladenylate intermediate, with the release of diphosphate. This is Threonylcarbamoyl-AMP synthase from Chromobacterium violaceum (strain ATCC 12472 / DSM 30191 / JCM 1249 / CCUG 213 / NBRC 12614 / NCIMB 9131 / NCTC 9757 / MK).